The following is a 540-amino-acid chain: Phenylalanine--tRNA ligase beta subunit (540 aa).

The region spanning 268–343 (LQHKSIKITA…ITYGYNNLSP (76 aa)) is the B5 domain. Mg(2+)-binding residues include D321, D327, E330, and E331.

Belongs to the phenylalanyl-tRNA synthetase beta subunit family. Type 2 subfamily. Tetramer of two alpha and two beta subunits. It depends on Mg(2+) as a cofactor.

Its subcellular location is the cytoplasm. The catalysed reaction is tRNA(Phe) + L-phenylalanine + ATP = L-phenylalanyl-tRNA(Phe) + AMP + diphosphate + H(+). The sequence is that of Phenylalanine--tRNA ligase beta subunit from Sulfurisphaera tokodaii (strain DSM 16993 / JCM 10545 / NBRC 100140 / 7) (Sulfolobus tokodaii).